The sequence spans 314 residues: D-alanine--D-alanine ligase (314 aa).

The region spanning 115 to 310 is the ATP-grasp domain; sequence KQVWQSVGLV…FNELVLEILA (196 aa). 141–196 provides a ligand contact to ATP; that stretch reads LDSLGGQGFVKPAHEGSSIGMSVVSTAQELKAAYEKAAHYDAKVLVERRIVGREFT. Residues Asp-264, Glu-277, and Asn-279 each contribute to the Mg(2+) site.

The protein belongs to the D-alanine--D-alanine ligase family. Mg(2+) serves as cofactor. Mn(2+) is required as a cofactor.

The protein localises to the cytoplasm. The enzyme catalyses 2 D-alanine + ATP = D-alanyl-D-alanine + ADP + phosphate + H(+). The protein operates within cell wall biogenesis; peptidoglycan biosynthesis. In terms of biological role, cell wall formation. The polypeptide is D-alanine--D-alanine ligase (Saccharophagus degradans (strain 2-40 / ATCC 43961 / DSM 17024)).